Here is a 109-residue protein sequence, read N- to C-terminus: Nucleoid-associated protein BUsg_467 (109 aa).

The protein belongs to the YbaB/EbfC family. As to quaternary structure, homodimer.

The protein localises to the cytoplasm. It localises to the nucleoid. Its function is as follows. Binds to DNA and alters its conformation. May be involved in regulation of gene expression, nucleoid organization and DNA protection. The polypeptide is Nucleoid-associated protein BUsg_467 (Buchnera aphidicola subsp. Schizaphis graminum (strain Sg)).